Consider the following 575-residue polypeptide: Phosphoenolpyruvate-protein phosphotransferase (575 aa).

Position 122 is a phosphotyrosine (tyrosine 122). Histidine 189 functions as the Tele-phosphohistidine intermediate in the catalytic mechanism. Arginine 296 and arginine 332 together coordinate phosphoenolpyruvate. Mg(2+) contacts are provided by glutamate 431 and aspartate 455. Residues 454–455 (ND) and arginine 465 each bind phosphoenolpyruvate. Cysteine 502 acts as the Proton donor in catalysis.

It belongs to the PEP-utilizing enzyme family. Homodimer. Interacts with the pole-localizer protein TmaR. Binding to TmaR is reversible as long as TmaR can get phosphorylated, whereas binding to non-phosphorylated TmaR is very strong and shifts the equilibrium toward binding. Mg(2+) is required as a cofactor. In terms of processing, phosphorylated on Tyr-122. Phosphorylation on Tyr-122 is important for polar localization but not for interaction with TmaR and for activity.

It is found in the cytoplasm. It carries out the reaction L-histidyl-[protein] + phosphoenolpyruvate = N(pros)-phospho-L-histidyl-[protein] + pyruvate. With respect to regulation, inhibited by oxalate. General (non sugar-specific) component of the phosphoenolpyruvate-dependent sugar phosphotransferase system (sugar PTS). This major carbohydrate active-transport system catalyzes the phosphorylation of incoming sugar substrates concomitantly with their translocation across the cell membrane. Enzyme I transfers the phosphoryl group from phosphoenolpyruvate (PEP) to the phosphoryl carrier protein (HPr). Can also use (Z)-3-fluoro-PEP (ZFPEP), (Z)-3-methyl-PEP (ZMePEP), (Z)-3-chloro-PEP (ZClPEP) and (E)-3-chloro-PEP (EClPEP) as alternative phosphoryl donors. The chain is Phosphoenolpyruvate-protein phosphotransferase from Escherichia coli (strain K12).